A 175-amino-acid chain; its full sequence is NADH-ubiquinone oxidoreductase chain 6 (175 aa).

Transmembrane regions (helical) follow at residues 1–21 (MMTYIVFILSTVFVVGFVGFS), 27–47 (VYGGVGLIVSGGVGCGIIMNF), 49–69 (GSFLGLMVFLIYLGGMMVVFG), 88–108 (VVFGAFVFGLFMEMLLVLYVL), and 149–169 (YGMWLVVVTGWSLFIAVVVVM).

It belongs to the complex I subunit 6 family. As to quaternary structure, core subunit of respiratory chain NADH dehydrogenase (Complex I) which is composed of 45 different subunits.

Its subcellular location is the mitochondrion inner membrane. It carries out the reaction a ubiquinone + NADH + 5 H(+)(in) = a ubiquinol + NAD(+) + 4 H(+)(out). Its function is as follows. Core subunit of the mitochondrial membrane respiratory chain NADH dehydrogenase (Complex I) which catalyzes electron transfer from NADH through the respiratory chain, using ubiquinone as an electron acceptor. Essential for the catalytic activity and assembly of complex I. The chain is NADH-ubiquinone oxidoreductase chain 6 (MT-ND6) from Pteropus scapulatus (Little red flying fox).